The chain runs to 200 residues: Imidazole glycerol phosphate synthase subunit HisH (200 aa).

The Glutamine amidotransferase type-1 domain occupies 2 to 200 (KVAIVEYGVG…LGEVLTGASR (199 aa)). Cys-79 serves as the catalytic Nucleophile. Catalysis depends on residues His-179 and Glu-181.

As to quaternary structure, heterodimer of HisH and HisF.

Its subcellular location is the cytoplasm. It carries out the reaction 5-[(5-phospho-1-deoxy-D-ribulos-1-ylimino)methylamino]-1-(5-phospho-beta-D-ribosyl)imidazole-4-carboxamide + L-glutamine = D-erythro-1-(imidazol-4-yl)glycerol 3-phosphate + 5-amino-1-(5-phospho-beta-D-ribosyl)imidazole-4-carboxamide + L-glutamate + H(+). The enzyme catalyses L-glutamine + H2O = L-glutamate + NH4(+). It functions in the pathway amino-acid biosynthesis; L-histidine biosynthesis; L-histidine from 5-phospho-alpha-D-ribose 1-diphosphate: step 5/9. IGPS catalyzes the conversion of PRFAR and glutamine to IGP, AICAR and glutamate. The HisH subunit catalyzes the hydrolysis of glutamine to glutamate and ammonia as part of the synthesis of IGP and AICAR. The resulting ammonia molecule is channeled to the active site of HisF. This chain is Imidazole glycerol phosphate synthase subunit HisH, found in Methanopyrus kandleri (strain AV19 / DSM 6324 / JCM 9639 / NBRC 100938).